An 864-amino-acid polypeptide reads, in one-letter code: N-alpha-acetyltransferase 16, NatA auxiliary subunit (864 aa).

7 TPR repeats span residues 46-79, 80-113, 148-184, 224-257, 374-407, 408-441, and 485-514; these read GETL…DVRS, HVCW…DKDN, RASW…PPNK, LLVE…NAEN, IWVQ…TPTL, IELF…DTAD, and MWFE…VERH. Residues 594–646 are disordered; it reads KMLSKQRRAQKKAKVEEERKHTERERQQKNQKKKREEEEEVTSGHKEELIPEK. The segment covering 595 to 605 has biased composition (basic residues); sequence MLSKQRRAQKK. 2 stretches are compositionally biased toward basic and acidic residues: residues 606–621 and 635–646; these read AKVE…ERQQ and TSGHKEELIPEK.

In terms of assembly, component of the N-terminal acetyltransferase A (NatA) complex composed of NAA10 and NAA16. In terms of tissue distribution, highest levels in the kidney and testes. Moderate expression in the liver, thymus and skin.

In terms of biological role, auxillary subunit of the N-terminal acetyltransferase A (NatA) complex which displays alpha (N-terminal) acetyltransferase activity. This chain is N-alpha-acetyltransferase 16, NatA auxiliary subunit (Naa16), found in Mus musculus (Mouse).